We begin with the raw amino-acid sequence, 303 residues long: N-acetyl-D-glucosamine kinase (303 aa).

Residues 4 to 11 (GFDIGGTK) and 133 to 140 (GVGGGLIF) each bind ATP. H157, C177, C179, and C184 together coordinate Zn(2+).

The protein belongs to the ROK (NagC/XylR) family. NagK subfamily.

It carries out the reaction N-acetyl-D-glucosamine + ATP = N-acetyl-D-glucosamine 6-phosphate + ADP + H(+). The protein operates within cell wall biogenesis; peptidoglycan recycling. Functionally, catalyzes the phosphorylation of N-acetyl-D-glucosamine (GlcNAc) derived from cell-wall degradation, yielding GlcNAc-6-P. This is N-acetyl-D-glucosamine kinase from Escherichia coli O6:H1 (strain CFT073 / ATCC 700928 / UPEC).